We begin with the raw amino-acid sequence, 350 residues long: Casein kinase II subunit alpha' (350 aa).

Phosphotyrosine is present on Y13. 2 positions are modified to phosphoserine: S18 and S21. The Protein kinase domain occupies 40 to 325 (YQLVRKLGRG…AKEAMEHPYF (286 aa)). ATP is bound by residues 46 to 54 (LGRGKYSEV) and K69. K97 bears the N6-acetyllysine mark. The active-site Proton acceptor is D157. A Phosphoserine modification is found at S288.

Belongs to the protein kinase superfamily. Ser/Thr protein kinase family. CK2 subfamily. As to quaternary structure, heterotetramer composed of two catalytic subunits (alpha chain and/or alpha' chain) and two regulatory subunits (beta chains). The tetramer can exist as a combination of 2 alpha/2 beta, 2 alpha'/2 beta or 1 alpha/1 alpha'/2 beta subunits. Also part of a CK2-SPT16-SSRP1 complex composed of SSRP1, SUPT16H, CSNK2A1, CSNK2A2 and CSNK2B, which forms following UV irradiation. Interacts with RNPS1. Interacts with CSNK2A2IP (via C-terminus). Interacts with SIRT6; preventing CSNK2A2 localization to the nucleus. Interacts with HIRIP3. Highly expressed in brain, testis and mature epididymal spermatozoa. Weakly expressed in kidney, liver, lung, spleen and thymus (at protein level).

Its subcellular location is the nucleus. The protein localises to the cytoplasm. It carries out the reaction L-seryl-[protein] + ATP = O-phospho-L-seryl-[protein] + ADP + H(+). It catalyses the reaction L-threonyl-[protein] + ATP = O-phospho-L-threonyl-[protein] + ADP + H(+). Constitutively active protein kinase whose activity is not directly affected by phosphorylation. Seems to be regulated by level of expression and localization. Its function is as follows. Catalytic subunit of a constitutively active serine/threonine-protein kinase complex that phosphorylates a large number of substrates containing acidic residues C-terminal to the phosphorylated serine or threonine. Regulates numerous cellular processes, such as cell cycle progression, apoptosis and transcription, as well as viral infection. May act as a regulatory node which integrates and coordinates numerous signals leading to an appropriate cellular response. During mitosis, functions as a component of the p53/TP53-dependent spindle assembly checkpoint (SAC) that maintains cyclin-B-CDK1 activity and G2 arrest in response to spindle damage. Also required for p53/TP53-mediated apoptosis, phosphorylating 'Ser-392' of p53/TP53 following UV irradiation. Phosphorylates a number of DNA repair proteins in response to DNA damage, such as MDC1, RAD9A, RAD51 and HTATSF1, promoting their recruitment to DNA damage sites. Can also negatively regulate apoptosis. Phosphorylates the caspases CASP9 and CASP2 and the apoptotic regulator NOL3. Phosphorylation protects CASP9 from cleavage and activation by CASP8, and inhibits the dimerization of CASP2 and activation of CASP8. Regulates transcription by direct phosphorylation of RNA polymerases I, II, III and IV. Also phosphorylates and regulates numerous transcription factors including NF-kappa-B, STAT1, CREB1, IRF1, IRF2, ATF1, SRF, MAX, JUN, FOS, MYC and MYB. Phosphorylates Hsp90 and its co-chaperones FKBP4 and CDC37, which is essential for chaperone function. Regulates Wnt signaling by phosphorylating CTNNB1 and the transcription factor LEF1. Acts as an ectokinase that phosphorylates several extracellular proteins. May phosphorylate histone H2A on 'Ser-1'. The sequence is that of Casein kinase II subunit alpha' (Csnk2a2) from Mus musculus (Mouse).